Reading from the N-terminus, the 585-residue chain is Protein-lysine N-methyltransferase EFM1 (585 aa).

Residues 23–281 (PKISFRITED…AQDELFNNYG (259 aa)) enclose the SET domain. S-adenosyl-L-methionine is bound at residue Y280.

This sequence belongs to the class V-like SAM-binding methyltransferase superfamily. RKM1 family.

Its subcellular location is the cytoplasm. Its function is as follows. S-adenosyl-L-methionine-dependent protein-lysine N-methyltransferase that monomethylates elongation factor 1-alpha (TEF1/TEF2) at 'Lys-30'. The sequence is that of Protein-lysine N-methyltransferase EFM1 from Saccharomyces cerevisiae (strain ATCC 204508 / S288c) (Baker's yeast).